The primary structure comprises 397 residues: Ribosomal RNA large subunit methyltransferase I (397 aa).

The 79-residue stretch at 2–80 (SAAIYLVKGR…QDVNRAFFVK (79 aa)) folds into the PUA domain.

The protein belongs to the methyltransferase superfamily. RlmI family.

It localises to the cytoplasm. The enzyme catalyses cytidine(1962) in 23S rRNA + S-adenosyl-L-methionine = 5-methylcytidine(1962) in 23S rRNA + S-adenosyl-L-homocysteine + H(+). In terms of biological role, specifically methylates the cytosine at position 1962 (m5C1962) of 23S rRNA. This chain is Ribosomal RNA large subunit methyltransferase I, found in Vibrio vulnificus (strain YJ016).